Reading from the N-terminus, the 300-residue chain is F-box/LRR-repeat protein 15 (300 aa).

Methionine 1 is modified (N-acetylmethionine). One can recognise an F-box domain in the interval 19-66 (LLDLPWEDVLLPHVLSRVPLRQLLWLQRVSRAFRALVQLHLARLRRFD). Positions 113–269 (NPQLRSVALA…EPSLSRLRKR (157 aa)) are interaction with SMURF1. LRR repeat units lie at residues 141–162 (RLQR…RGLA), 167–188 (ALEE…VYLA), 194–215 (GLRN…QELA), 220–241 (ELQH…RTLA), and 246–267 (ALRS…SRLR).

It belongs to the FBXL15 family. Part of the SCF (SKP1-CUL1-F-box) E3 ubiquitin-protein ligase complex SCF(FBXL15) composed of CUL1, SKP1, RBX1 and FBXL15.

The protein resides in the cytoplasm. Its pathway is protein modification; protein ubiquitination. Its function is as follows. Substrate recognition component of a SCF (SKP1-CUL1-F-box protein) E3 ubiquitin-protein ligase complex which mediates the ubiquitination and subsequent proteasomal degradation of SMURF1, thereby acting as a positive regulator of the BMP signaling pathway. Required for dorsal/ventral pattern formation and bone mass maintenance. Also mediates ubiquitination of SMURF2 and WWP2. The chain is F-box/LRR-repeat protein 15 (FBXL15) from Bos taurus (Bovine).